The sequence spans 432 residues: Adenylosuccinate synthetase (432 aa).

GTP is bound by residues glycine 13 to lysine 19 and glycine 41 to threonine 43. Aspartate 14 acts as the Proton acceptor in catalysis. Residues aspartate 14 and glycine 41 each contribute to the Mg(2+) site. Residues aspartate 14–lysine 17, asparagine 39–histidine 42, threonine 131, arginine 145, glutamine 226, threonine 241, and arginine 305 contribute to the IMP site. Catalysis depends on histidine 42, which acts as the Proton donor. Serine 301 to arginine 307 lines the substrate pocket. GTP is bound by residues arginine 307, lysine 333–aspartate 335, and serine 416–glycine 418.

It belongs to the adenylosuccinate synthetase family. Homodimer. It depends on Mg(2+) as a cofactor.

The protein resides in the cytoplasm. It catalyses the reaction IMP + L-aspartate + GTP = N(6)-(1,2-dicarboxyethyl)-AMP + GDP + phosphate + 2 H(+). It functions in the pathway purine metabolism; AMP biosynthesis via de novo pathway; AMP from IMP: step 1/2. Its function is as follows. Plays an important role in the de novo pathway of purine nucleotide biosynthesis. Catalyzes the first committed step in the biosynthesis of AMP from IMP. This Neisseria meningitidis serogroup B (strain ATCC BAA-335 / MC58) protein is Adenylosuccinate synthetase.